The chain runs to 245 residues: Brasilane terpene glycosides biosynthesis cluster protein D (245 aa).

2 consecutive C3H1-type zinc fingers follow at residues 121 to 152 (KELK…HDNV) and 161 to 185 (ICHF…HYPA). Positions 186–245 (PHRVTAPMPSKKKSKKLRSSVADDASHPDLGKARRHDPRDDEQNDEVWRNQGRARPGQEW) are disordered. A compositionally biased stretch (basic and acidic residues) spans 209-226 (DASHPDLGKARRHDPRDD).

Its function is as follows. Part of the gene cluster that mediates the biosynthesis of the brasilane terpene glycosides brasilane D and E. The biosynthesis starts with the activity of the terpene cyclase braA that converts farnesyl pyrophosphate into the sesquiterpene alcohol trichobrasilenol. Subsequently, trichobrasilenol is glycosylated by the O-glycosyltransferase braB putatively using UDP-GlcNAc as sugar donor to yield brasilane A. The latter then undergoes two rounds of oxidation performed by the cytochrome P450 monooxygenase braC. In the first round braC hydroxylates C-12 forming brasilane D, which serves as substrate in the second round to establish the epoxide at the bond between C-5 and C-10 and oxidize the alcohol at C-12 to an aldehyde leading to the final product brasilane E. This chain is Brasilane terpene glycosides biosynthesis cluster protein D, found in Annulohypoxylon truncatum (Hypoxylon truncatum).